The chain runs to 260 residues: Large ribosomal subunit protein uL4 (260 aa).

It belongs to the universal ribosomal protein uL4 family. In terms of assembly, part of the 50S ribosomal subunit.

Functionally, one of the primary rRNA binding proteins, this protein initially binds near the 5'-end of the 23S rRNA. It is important during the early stages of 50S assembly. It makes multiple contacts with different domains of the 23S rRNA in the assembled 50S subunit and ribosome. Forms part of the polypeptide exit tunnel. The chain is Large ribosomal subunit protein uL4 from Methanopyrus kandleri (strain AV19 / DSM 6324 / JCM 9639 / NBRC 100938).